The sequence spans 1234 residues: DNA-directed RNA polymerase I subunit RPA2 (1234 aa).

Residues 1119-1150 form a C4-type zinc finger; it reads CRQCGSFLSTQPTVSPFIGKRKAVSTVRCRNC.

It belongs to the RNA polymerase beta chain family. Component of the RNA polymerase I (Pol I) complex consisting of 14 subunits.

Its subcellular location is the nucleus. It is found in the nucleolus. The enzyme catalyses RNA(n) + a ribonucleoside 5'-triphosphate = RNA(n+1) + diphosphate. In terms of biological role, DNA-dependent RNA polymerase catalyzes the transcription of DNA into RNA using the four ribonucleoside triphosphates as substrates. Second largest core component of RNA polymerase I which synthesizes ribosomal RNA precursors. Proposed to contribute to the polymerase catalytic activity and forms the polymerase active center together with the largest subunit. Pol I is composed of mobile elements and RPA2 is part of the core element with the central large cleft and probably a clamp element that moves to open and close the cleft. This chain is DNA-directed RNA polymerase I subunit RPA2 (acr-2), found in Neurospora crassa (strain ATCC 24698 / 74-OR23-1A / CBS 708.71 / DSM 1257 / FGSC 987).